A 182-amino-acid polypeptide reads, in one-letter code: Bifunctional protein PyrR (182 aa).

The PRPP-binding motif lies at 99–111; that stretch reads IVLVDDVLFTGRT.

The protein belongs to the purine/pyrimidine phosphoribosyltransferase family. PyrR subfamily. In terms of assembly, homodimer and homohexamer; in equilibrium.

The enzyme catalyses UMP + diphosphate = 5-phospho-alpha-D-ribose 1-diphosphate + uracil. Functionally, regulates transcriptional attenuation of the pyrimidine nucleotide (pyr) operon by binding in a uridine-dependent manner to specific sites on pyr mRNA. This disrupts an antiterminator hairpin in the RNA and favors formation of a downstream transcription terminator, leading to a reduced expression of downstream genes. In terms of biological role, also displays a weak uracil phosphoribosyltransferase activity which is not physiologically significant. The chain is Bifunctional protein PyrR from Caldicellulosiruptor bescii (strain ATCC BAA-1888 / DSM 6725 / KCTC 15123 / Z-1320) (Anaerocellum thermophilum).